We begin with the raw amino-acid sequence, 1409 residues long: DNA-directed RNA polymerase subunit beta' (1409 aa).

Zn(2+)-binding residues include Cys-70, Cys-72, Cys-85, and Cys-88. Mg(2+) contacts are provided by Asp-460, Asp-462, and Asp-464. Positions 822, 896, 903, and 906 each coordinate Zn(2+).

Belongs to the RNA polymerase beta' chain family. As to quaternary structure, the RNAP catalytic core consists of 2 alpha, 1 beta, 1 beta' and 1 omega subunit. When a sigma factor is associated with the core the holoenzyme is formed, which can initiate transcription. It depends on Mg(2+) as a cofactor. Zn(2+) is required as a cofactor.

The enzyme catalyses RNA(n) + a ribonucleoside 5'-triphosphate = RNA(n+1) + diphosphate. Its function is as follows. DNA-dependent RNA polymerase catalyzes the transcription of DNA into RNA using the four ribonucleoside triphosphates as substrates. The polypeptide is DNA-directed RNA polymerase subunit beta' (Methylobacillus flagellatus (strain ATCC 51484 / DSM 6875 / VKM B-1610 / KT)).